The sequence spans 222 residues: Sigma non-opioid intracellular receptor 1 (222 aa).

At 1 to 7 (MGVAGPW) the chain is on the lumenal side. A helical transmembrane segment spans residues 8-29 (VLRVGLGLGAFALLLQGLRGWL). Residues 30-222 (ACKRYEFQPA…ASAFFSTLGC (193 aa)) lie on the Cytoplasmic side of the membrane. The interval 98–105 (SLTEYVLL) is important for ligand-binding. Residues 176–222 (FVPSTLAFALADTLFSTQDFITLFYTLRAYTKGLLLEASAFFSTLGC) form a C-terminal hydrophobic region region.

This sequence belongs to the ERG2 family. As to quaternary structure, homotrimer.

The protein localises to the nucleus inner membrane. The protein resides in the nucleus outer membrane. It is found in the nucleus envelope. It localises to the cytoplasmic vesicle. Its subcellular location is the endoplasmic reticulum membrane. The protein localises to the membrane. In terms of biological role, may function in lipid transport from the endoplasmic reticulum and be involved in a wide array of cellular functions probably through regulation of the biogenesis of lipid microdomains at the plasma membrane. May regulate calcium efflux at the endoplasmic reticulum. The protein is Sigma non-opioid intracellular receptor 1 (SIGMAR1) of Gallus gallus (Chicken).